The primary structure comprises 325 residues: Phospho-N-acetylmuramoyl-pentapeptide-transferase (325 aa).

The next 10 helical transmembrane spans lie at 9–29 (ALLVSFFVALGGGRVLIPWLL), 53–73 (TMGGIIFLLSLVVTVVVFQAF), 77–97 (TLLLLITTLLFGLLGFLDDYL), 112–132 (KLLGQVIFSLVLTFGAVAFLG), 154–174 (LGNVFFFAATIFIMVGFANAV), 182–202 (GLCSSVTLIVMSFFAMTSLAL), 204–224 (EKGLFIFALALMGGLVGFLVY), 231–251 (VFMGDTGSLALGAAVAGFAVL), 257–277 (FLLLVGLIYVVETLSVIIQVI), and 305–325 (KIVLVFSLVTLIMVLISGYGL).

The protein belongs to the glycosyltransferase 4 family. MraY subfamily. Mg(2+) serves as cofactor.

The protein resides in the cell membrane. It catalyses the reaction UDP-N-acetyl-alpha-D-muramoyl-L-alanyl-gamma-D-glutamyl-meso-2,6-diaminopimeloyl-D-alanyl-D-alanine + di-trans,octa-cis-undecaprenyl phosphate = di-trans,octa-cis-undecaprenyl diphospho-N-acetyl-alpha-D-muramoyl-L-alanyl-D-glutamyl-meso-2,6-diaminopimeloyl-D-alanyl-D-alanine + UMP. It functions in the pathway cell wall biogenesis; peptidoglycan biosynthesis. Its function is as follows. Catalyzes the initial step of the lipid cycle reactions in the biosynthesis of the cell wall peptidoglycan: transfers peptidoglycan precursor phospho-MurNAc-pentapeptide from UDP-MurNAc-pentapeptide onto the lipid carrier undecaprenyl phosphate, yielding undecaprenyl-pyrophosphoryl-MurNAc-pentapeptide, known as lipid I. This Carboxydothermus hydrogenoformans (strain ATCC BAA-161 / DSM 6008 / Z-2901) protein is Phospho-N-acetylmuramoyl-pentapeptide-transferase.